A 302-amino-acid polypeptide reads, in one-letter code: ATP synthase gamma chain, sodium ion specific (302 aa).

This sequence belongs to the ATPase gamma chain family. As to quaternary structure, F-type ATPases have 2 components, CF(1) - the catalytic core - and CF(0) - the membrane proton channel. CF(1) has five subunits: alpha(3), beta(3), gamma(1), delta(1), epsilon(1). CF(0) has three main subunits: a, b and c.

It localises to the cell membrane. Inhibited by nitrate. In terms of biological role, produces ATP from ADP in the presence of a proton gradient across the membrane. The gamma chain is believed to be important in regulating ATPase activity and the flow of protons through the CF(0) complex. The sequence is that of ATP synthase gamma chain, sodium ion specific (atpG) from Acetobacterium woodii (strain ATCC 29683 / DSM 1030 / JCM 2381 / KCTC 1655 / WB1).